Reading from the N-terminus, the 941-residue chain is Endoplasmic reticulum aminopeptidase 1 (941 aa).

Residue M1 is a topological domain, cytoplasmic. A helical; Signal-anchor for type II membrane protein membrane pass occupies residues V2–L21. At A22–M941 the chain is on the lumenal side. N-linked (GlcNAc...) asparagine glycans are attached at residues N70 and N154. Substrate is bound by residues E183 and G317–N321. H353 provides a ligand contact to Zn(2+). Residue E354 is the Proton acceptor of the active site. Zn(2+) contacts are provided by H357 and E376. Cystine bridges form between C404–C443 and C736–C743. N-linked (GlcNAc...) asparagine glycosylation occurs at N414. N760 and N901 each carry an N-linked (GlcNAc...) asparagine glycan.

The protein belongs to the peptidase M1 family. Monomer. May also exist as a heterodimer; with ERAP2. Interacts with RBMX. It depends on Zn(2+) as a cofactor. In terms of processing, N-glycosylated. As to expression, ubiquitous.

The protein resides in the endoplasmic reticulum membrane. In terms of biological role, aminopeptidase that plays a central role in peptide trimming, a step required for the generation of most HLA class I-binding peptides. Peptide trimming is essential to customize longer precursor peptides to fit them to the correct length required for presentation on MHC class I molecules. Strongly prefers substrates 9-16 residues long. Rapidly degrades 13-mer to a 9-mer and then stops. Preferentially hydrolyzes the residue Leu and peptides with a hydrophobic C-terminus, while it has weak activity toward peptides with charged C-terminus. May play a role in the inactivation of peptide hormones. May be involved in the regulation of blood pressure through the inactivation of angiotensin II and/or the generation of bradykinin in the kidney. This Homo sapiens (Human) protein is Endoplasmic reticulum aminopeptidase 1 (ERAP1).